A 99-amino-acid chain; its full sequence is Aspartyl/glutamyl-tRNA(Asn/Gln) amidotransferase subunit C (99 aa).

It belongs to the GatC family. Heterotrimer of A, B and C subunits.

It catalyses the reaction L-glutamyl-tRNA(Gln) + L-glutamine + ATP + H2O = L-glutaminyl-tRNA(Gln) + L-glutamate + ADP + phosphate + H(+). The catalysed reaction is L-aspartyl-tRNA(Asn) + L-glutamine + ATP + H2O = L-asparaginyl-tRNA(Asn) + L-glutamate + ADP + phosphate + 2 H(+). Its function is as follows. Allows the formation of correctly charged Asn-tRNA(Asn) or Gln-tRNA(Gln) through the transamidation of misacylated Asp-tRNA(Asn) or Glu-tRNA(Gln) in organisms which lack either or both of asparaginyl-tRNA or glutaminyl-tRNA synthetases. The reaction takes place in the presence of glutamine and ATP through an activated phospho-Asp-tRNA(Asn) or phospho-Glu-tRNA(Gln). The sequence is that of Aspartyl/glutamyl-tRNA(Asn/Gln) amidotransferase subunit C from Burkholderia ambifaria (strain MC40-6).